We begin with the raw amino-acid sequence, 206 residues long: 2,3-bisphosphoglycerate-dependent phosphoglycerate mutase (206 aa).

Substrate contacts are provided by residues 9-16 (RHGQSEWN), 22-23 (TG), arginine 61, 88-91 (ERNY), lysine 99, 115-116 (RR), and 159-160 (GN). Histidine 10 acts as the Tele-phosphohistidine intermediate in catalysis. The active-site Proton donor/acceptor is glutamate 88.

Belongs to the phosphoglycerate mutase family. BPG-dependent PGAM subfamily. Homodimer.

It catalyses the reaction (2R)-2-phosphoglycerate = (2R)-3-phosphoglycerate. Its pathway is carbohydrate degradation; glycolysis; pyruvate from D-glyceraldehyde 3-phosphate: step 3/5. In terms of biological role, catalyzes the interconversion of 2-phosphoglycerate and 3-phosphoglycerate. This chain is 2,3-bisphosphoglycerate-dependent phosphoglycerate mutase, found in Bartonella tribocorum (strain CIP 105476 / IBS 506).